The chain runs to 415 residues: Calcium/calmodulin-dependent serine/threonine-protein kinase (415 aa).

In terms of domain architecture, Protein kinase spans 12–308 (YEISEILGRG…AQELLDHPWV (297 aa)). ATP contacts are provided by residues 18–26 (LGRGGFSVV) and lysine 46. The active-site Proton acceptor is aspartate 173. A calmodulin-binding region spans residues 318 to 328 (MDAEIVSRLQS).

Belongs to the protein kinase superfamily. CAMK Ser/Thr protein kinase family. CaMK subfamily.

The catalysed reaction is L-seryl-[protein] + ATP = O-phospho-L-seryl-[protein] + ADP + H(+). The enzyme catalyses L-threonyl-[protein] + ATP = O-phospho-L-threonyl-[protein] + ADP + H(+). In terms of biological role, may be involved in signal transduction processes. The polypeptide is Calcium/calmodulin-dependent serine/threonine-protein kinase (Malus domestica (Apple)).